Here is a 368-residue protein sequence, read N- to C-terminus: V-type proton ATPase subunit C (368 aa).

This sequence belongs to the V-ATPase C subunit family. V-ATPase is a heteromultimeric enzyme composed of a peripheral catalytic V1 complex (components A to H) attached to an integral membrane V0 proton pore complex (components: a, c, c', c'' and d).

Its function is as follows. Subunit of the peripheral V1 complex of vacuolar ATPase. Subunit C is necessary for the assembly of the catalytic sector of the enzyme and is likely to have a specific function in its catalytic activity. V-ATPase is responsible for acidifying a variety of intracellular compartments in eukaryotic cells. This is V-type proton ATPase subunit C (vatC) from Dictyostelium discoideum (Social amoeba).